The following is a 324-amino-acid chain: Annexin A10 (324 aa).

Annexin repeat units lie at residues 17 to 88 (FNPI…GLMY), 89 to 160 (PPPL…NLVQ), 171 to 243 (AMAA…AIVL), and 247 to 318 (DKPA…AICA).

The protein belongs to the annexin family.

This is Annexin A10 (ANXA10) from Homo sapiens (Human).